A 341-amino-acid chain; its full sequence is Ras association domain-containing protein 6 (341 aa).

Residue Ser155 is modified to Phosphoserine. A Ras-associating domain is found at 190-278 (YDHETSIFTP…ARIFLMDKDA (89 aa)). The SARAH domain maps to 285 to 332 (VAPYINFHFSFLKSILQRLDEEEKMEIERIMAKFNTERAFILKCLQSK).

In terms of assembly, interacts with MOAP1. Interaction with activated KRAS is still a matter of debate.

Its function is as follows. Involved in the induction of apoptosis. May act as a Ras effector protein. May suppress the serum-induced basal levels of NF-kappa-B. The chain is Ras association domain-containing protein 6 (Rassf6) from Rattus norvegicus (Rat).